A 769-amino-acid chain; its full sequence is Endonuclease MutS2 (769 aa).

Gly335 to Thr342 is a binding site for ATP. In terms of domain architecture, Smr spans Ile694–Val769.

This sequence belongs to the DNA mismatch repair MutS family. MutS2 subfamily. In terms of assembly, homodimer. Binds to stalled ribosomes, contacting rRNA.

Functionally, endonuclease that is involved in the suppression of homologous recombination and thus may have a key role in the control of bacterial genetic diversity. Acts as a ribosome collision sensor, splitting the ribosome into its 2 subunits. Detects stalled/collided 70S ribosomes which it binds and splits by an ATP-hydrolysis driven conformational change. Acts upstream of the ribosome quality control system (RQC), a ribosome-associated complex that mediates the extraction of incompletely synthesized nascent chains from stalled ribosomes and their subsequent degradation. Probably generates substrates for RQC. The polypeptide is Endonuclease MutS2 (Maridesulfovibrio salexigens (strain ATCC 14822 / DSM 2638 / NCIMB 8403 / VKM B-1763) (Desulfovibrio salexigens)).